A 417-amino-acid chain; its full sequence is Probable secreted beta-glucosidase PSU1 (417 aa).

The N-terminal stretch at 1-18 (MRFFETLALALLTTGALA) is a signal peptide.

Belongs to the SUN family.

The protein localises to the secreted. The protein resides in the cell wall. Its function is as follows. Involved in cell wall synthesis. May be required for the activation of 1,3-beta-glucan synthase. The chain is Probable secreted beta-glucosidase PSU1 (psu1) from Schizosaccharomyces pombe (strain 972 / ATCC 24843) (Fission yeast).